Consider the following 184-residue polypeptide: Protein GrpE (184 aa).

Positions 1–10 (MTDTPPENEE) are enriched in acidic residues. Residues 1–22 (MTDTPPENEEQHESNVQNENEV) form a disordered region.

Belongs to the GrpE family. In terms of assembly, homodimer.

The protein localises to the cytoplasm. Participates actively in the response to hyperosmotic and heat shock by preventing the aggregation of stress-denatured proteins, in association with DnaK and GrpE. It is the nucleotide exchange factor for DnaK and may function as a thermosensor. Unfolded proteins bind initially to DnaJ; upon interaction with the DnaJ-bound protein, DnaK hydrolyzes its bound ATP, resulting in the formation of a stable complex. GrpE releases ADP from DnaK; ATP binding to DnaK triggers the release of the substrate protein, thus completing the reaction cycle. Several rounds of ATP-dependent interactions between DnaJ, DnaK and GrpE are required for fully efficient folding. This chain is Protein GrpE, found in Chlamydia pneumoniae (Chlamydophila pneumoniae).